Here is a 380-residue protein sequence, read N- to C-terminus: ATPase ASNA1 homolog (380 aa).

An ATP-binding site is contributed by 48 to 55 (KGGVGKTT). Aspartate 77 is a catalytic residue. Positions 248 and 275 each coordinate ATP.

Belongs to the arsA ATPase family. Homodimer.

It is found in the cytoplasm. The protein localises to the endoplasmic reticulum. In terms of biological role, ATPase required for the post-translational delivery of tail-anchored (TA) proteins to the endoplasmic reticulum. Recognizes and selectively binds the transmembrane domain of TA proteins in the cytosol. This complex then targets to the endoplasmic reticulum by membrane-bound receptors, where the tail-anchored protein is released for insertion. This process is regulated by ATP binding and hydrolysis. ATP binding drives the homodimer towards the closed dimer state, facilitating recognition of newly synthesized TA membrane proteins. ATP hydrolysis is required for insertion. Subsequently, the homodimer reverts towards the open dimer state, lowering its affinity for the membrane-bound receptor, and returning it to the cytosol to initiate a new round of targeting. This Plasmodium chabaudi chabaudi protein is ATPase ASNA1 homolog.